The following is a 648-amino-acid chain: DNA ligase (648 aa).

Residues 63–67 (DILYD) and 105–106 (ST) each bind NAD(+). The N6-AMP-lysine intermediate role is filled by Lys-143. Positions 159, 190, and 302 each coordinate NAD(+). 4 residues coordinate Zn(2+): Cys-390, Cys-393, Cys-406, and Cys-412. A BRCT domain is found at 570–648 (SLASPLTGKI…SEQEYLDLIS (79 aa)).

This sequence belongs to the NAD-dependent DNA ligase family. LigA subfamily. Mg(2+) is required as a cofactor. Mn(2+) serves as cofactor.

The catalysed reaction is NAD(+) + (deoxyribonucleotide)n-3'-hydroxyl + 5'-phospho-(deoxyribonucleotide)m = (deoxyribonucleotide)n+m + AMP + beta-nicotinamide D-nucleotide.. Functionally, DNA ligase that catalyzes the formation of phosphodiester linkages between 5'-phosphoryl and 3'-hydroxyl groups in double-stranded DNA using NAD as a coenzyme and as the energy source for the reaction. It is essential for DNA replication and repair of damaged DNA. The chain is DNA ligase from Shewanella baltica (strain OS155 / ATCC BAA-1091).